The sequence spans 571 residues: MMTILLQHTHLKNRLMPFLLALFLAGCTTFLGGGSASLLQSDANANSDFYMNKVYQAQNLEEQHTYKLLAARVLVTENKIPQAQALLNELTTLTDEQVLDKSIIEAHIAAVKQQNTVADTQLKHINLAQLSRSQLARYYDVAARIAENRYDAIEAVKARIQIDQLLSDVSRKQANIDRTWSLLRNANRGVINNTVAEGNIALGGWLALTRAYNQNLSNPAQLSQAIQQWKTAYPTHPAAYLFPTELQGLFNFQQTQFSQVALLLPLSGNAQVIGNTIKAGFDAAKDNSATQVQVFDTAATPVDVIFDQVKQAGIRTVVGPLLKQNVDMLLNNAQLVQGLDVLTLNSTSNERAIGQLCYYGLSPEDEAESAANKMWKDGIRTPSVFVPQNDLGRRTASAFNVRWQQLAATDANIRFYNLPADITYTLDDQNTSGVYIVAMSDQLAEIKTTIDNSGRTTKLYASSRSNSANNAPEYRLLMEGLQFSDIPFFKDVTSNQYKKIEKLTKGDFSLMRLYAMGADAWLLINHFNELRQVPGYNIDGLTGKLSAGANCNIERDMTWFQYQSGGIISLN.

The signal sequence occupies residues 1 to 26 (MMTILLQHTHLKNRLMPFLLALFLAG). Cys-27 carries the N-palmitoyl cysteine lipid modification. A lipid anchor (S-diacylglycerol cysteine) is attached at Cys-27.

Belongs to the LpoA family. In terms of assembly, interacts with PBP1a.

The protein resides in the cell outer membrane. Regulator of peptidoglycan synthesis that is essential for the function of penicillin-binding protein 1A (PBP1a). The sequence is that of Penicillin-binding protein activator LpoA from Pasteurella multocida (strain Pm70).